The following is a 74-amino-acid chain: Translation initiation factor IF-1, chloroplastic (74 aa).

Residues 1-72 enclose the S1-like domain; it reads MERQNLIEME…TKGRITYRLR (72 aa).

The protein belongs to the IF-1 family. As to quaternary structure, component of the 30S ribosomal translation pre-initiation complex which assembles on the 30S ribosome in the order IF-2 and IF-3, IF-1 and N-formylmethionyl-tRNA(fMet); mRNA recruitment can occur at any time during PIC assembly.

The protein resides in the plastid. The protein localises to the chloroplast. In terms of biological role, one of the essential components for the initiation of protein synthesis. Stabilizes the binding of IF-2 and IF-3 on the 30S subunit to which N-formylmethionyl-tRNA(fMet) subsequently binds. Helps modulate mRNA selection, yielding the 30S pre-initiation complex (PIC). Upon addition of the 50S ribosomal subunit IF-1, IF-2 and IF-3 are released leaving the mature 70S translation initiation complex. The polypeptide is Translation initiation factor IF-1, chloroplastic (Mesostigma viride (Green alga)).